Consider the following 804-residue polypeptide: Probable basic-leucine zipper transcription factor C (804 aa).

Disordered regions lie at residues 86–148 (FISP…NDIN) and 275–371 (YGNV…PKKR). Residues 90–145 (NNNNNNNNNNNNNNNNNNNNNNNNNNNNNNNNNNNNNNNNNNNNNNNNNNNNNNNN) show a composition bias toward low complexity. Residues 275-291 (YGNVSDNSSPETNFSYA) are compositionally biased toward polar residues. Low complexity predominate over residues 292-334 (SPSSPSSTQSQSSPYEQQPLSPNPTISLSSSISVTATTTTRPN). Basic and acidic residues predominate over residues 335–356 (ATEKTKESSLKSKSKSNEKDKE). In terms of domain architecture, bZIP spans 415-478 (ALNYQFRKIK…DQYKLQEKQK (64 aa)). The tract at residues 421–436 (RKIKNRESARRSRERK) is basic motif. The segment at 443-450 (LEAKIAEI) is leucine-zipper. The tract at residues 670-693 (KNCNNNNENNNNNDNNKNSDDEKG) is disordered. Low complexity predominate over residues 672 to 685 (CNNNNENNNNNDNN).

It belongs to the bZIP family.

The protein localises to the nucleus. Probable transcriptional regulator. This chain is Probable basic-leucine zipper transcription factor C (bzpC), found in Dictyostelium discoideum (Social amoeba).